The primary structure comprises 307 residues: GTPase Era (307 aa).

Positions 17 to 186 constitute an Era-type G domain; the sequence is RCGFVAIVGR…LELIKPYLPE (170 aa). The segment at 25–32 is G1; it reads GRPNVGKS. GTP is bound at residue 25–32; that stretch reads GRPNVGKS. The G2 stretch occupies residues 51 to 55; the sequence is QTTRN. A G3 region spans residues 72 to 75; sequence DTPG. GTP-binding positions include 72 to 76 and 133 to 136; these read DTPGF and NKID. The G4 stretch occupies residues 133-136; that stretch reads NKID. The tract at residues 165-167 is G5; sequence VSA. One can recognise a KH type-2 domain in the interval 217 to 293; the sequence is LGEELPYAMN…FLKVWVKVKS (77 aa).

The protein belongs to the TRAFAC class TrmE-Era-EngA-EngB-Septin-like GTPase superfamily. Era GTPase family. In terms of assembly, monomer.

The protein localises to the cytoplasm. The protein resides in the cell inner membrane. Functionally, an essential GTPase that binds both GDP and GTP, with rapid nucleotide exchange. Plays a role in 16S rRNA processing and 30S ribosomal subunit biogenesis and possibly also in cell cycle regulation and energy metabolism. This Neisseria meningitidis serogroup A / serotype 4A (strain DSM 15465 / Z2491) protein is GTPase Era.